Consider the following 277-residue polypeptide: MAVKKFRPITPSLRQMTVATFEEITTDKPEKSLLVSLNKKAGRNSQGKITVRHRGGGAKRKYRIIDFKRTKDGIPAKVASIEYDPNRTAYIALVVYADGEKRYIIAPVGLKVGDVVMSGVDADIKVGNALPLKNIPVGTVIHNVELQAGKGAQLVRAAGSSAQLMAKEGKYAILRLPSGEMRYVRIECRAAIGTVSNVTNDIINIGKAGRKRHLGFRPTVRGSVMNPNDHPHGGGEGKSPIGHPSPLTPWGKPALGYKTRKNKKYSDGMIIKRRGQK.

Residues 218 to 277 form a disordered region; sequence PTVRGSVMNPNDHPHGGGEGKSPIGHPSPLTPWGKPALGYKTRKNKKYSDGMIIKRRGQK.

Belongs to the universal ribosomal protein uL2 family. In terms of assembly, part of the 50S ribosomal subunit. Forms a bridge to the 30S subunit in the 70S ribosome.

Its function is as follows. One of the primary rRNA binding proteins. Required for association of the 30S and 50S subunits to form the 70S ribosome, for tRNA binding and peptide bond formation. It has been suggested to have peptidyltransferase activity; this is somewhat controversial. Makes several contacts with the 16S rRNA in the 70S ribosome. The chain is Large ribosomal subunit protein uL2 from Clostridium novyi (strain NT).